A 358-amino-acid chain; its full sequence is Probable D-xylulose reductase A (358 aa).

Zn(2+)-binding residues include C47, H72, and E73. G182–G187 contacts NAD(+).

Belongs to the zinc-containing alcohol dehydrogenase family. Zn(2+) serves as cofactor.

It catalyses the reaction xylitol + NAD(+) = D-xylulose + NADH + H(+). It functions in the pathway carbohydrate degradation; L-arabinose degradation via L-arabinitol; D-xylulose 5-phosphate from L-arabinose (fungal route): step 4/5. Functionally, xylitol dehydrogenase which catalyzes the conversion of xylitol to D-xylulose. Xylose is a major component of hemicelluloses such as xylan. Most fungi utilize D-xylose via three enzymatic reactions, xylose reductase (XR), xylitol dehydrogenase (XDH), and xylulokinase, to form xylulose 5-phosphate, which enters pentose phosphate pathway. The protein is Probable D-xylulose reductase A (xdhA) of Neosartorya fischeri (strain ATCC 1020 / DSM 3700 / CBS 544.65 / FGSC A1164 / JCM 1740 / NRRL 181 / WB 181) (Aspergillus fischerianus).